The primary structure comprises 873 residues: MHEQYQPLEIETQAQNYWKEHQSFLVRELPDKEKFYCLSMFPYPSGKLHMGHVRNYTIGDVISRYHRMQGRNVLQPMGWDAFGMPAENAAMKNNVAPAAWTYDNIAYMKSQLDSLGLAIDWTREVTTCKPDYYRWEQWLFTRLFEKGVIYRKNGTVNWDPVDQTVLANEQVIDGRGWRSGALIEKREIPMYYFKITAYAEELLESLDNLPGWPEQVKTMQRNWIGKSRGMEIAFPYDQASIGHAGQLKVFTTRPDTLMGATYVAVAAEHPLATQAAQNDPQLQAFIDECKRGGVAEADIATQEKKGLATSLFVEHPLTGDKLPVWVANYVLMNYGEGAVMAVPGHDERDFEFANKYGLPIRQVIARVEGENDFEPTVWKEWYGAKDESVRTVNSGKYDDLGYQAAFDAIGADLEAKGLGQARTQFRLRDWGISRQRYWGCPIPIIHCDACGDVPVPAEQLPVVLPEDVVPDGAGSPLAKMPEFYECSCPKCGQPAKRETDTMDTFVESSWYFARYACPQFEGGMLDKKAADYWLPVDQYIGGIEHAILHLLYARFFHKLMRDEGLVGSDEPFRNLLTQGMVVADTYYRTTANGGKDWFNPADVEVERDAKAKVVGARLKSDGQPVEIGGTEKMSKSKNNGVDPQSMIDQYGADTCRLFMMFASPPDMSLEWSDAGVEGANRFLRRVWRLAHAHVSAGLPGALDGASLSDAQKQVRRAIHLAIRQASQDVGQHHKFNTAIAAVMTLMNVLEKAPSQDAQDRALLQEGLETVVLLLAPITPHICHVLWEQLGHAEAVIDARWPVVDESALVQDTLQLVVQVNGKLRGHIDVAASASREDVEAAARANENVLRFTEGLSIRKVIVVPGKLVNIVAN.

The 'HIGH' region motif lies at 42-52 (PYPSGKLHMGH). The interval 624–643 (PVEIGGTEKMSKSKNNGVDP) is disordered. Positions 632–636 (KMSKS) match the 'KMSKS' region motif. Position 635 (Lys-635) interacts with ATP.

This sequence belongs to the class-I aminoacyl-tRNA synthetase family.

The protein resides in the cytoplasm. The catalysed reaction is tRNA(Leu) + L-leucine + ATP = L-leucyl-tRNA(Leu) + AMP + diphosphate. The polypeptide is Leucine--tRNA ligase (Pseudomonas paraeruginosa (strain DSM 24068 / PA7) (Pseudomonas aeruginosa (strain PA7))).